The primary structure comprises 240 residues: Orotidine 5'-phosphate decarboxylase (240 aa).

Substrate-binding positions include aspartate 10, lysine 33, aspartate 60 to threonine 69, threonine 123, arginine 185, glutamine 194, glycine 214, and arginine 215. Lysine 62 (proton donor) is an active-site residue.

This sequence belongs to the OMP decarboxylase family. Type 1 subfamily. In terms of assembly, homodimer.

It carries out the reaction orotidine 5'-phosphate + H(+) = UMP + CO2. It participates in pyrimidine metabolism; UMP biosynthesis via de novo pathway; UMP from orotate: step 2/2. Functionally, catalyzes the decarboxylation of orotidine 5'-monophosphate (OMP) to uridine 5'-monophosphate (UMP). The chain is Orotidine 5'-phosphate decarboxylase from Lactobacillus delbrueckii subsp. bulgaricus (strain ATCC 11842 / DSM 20081 / BCRC 10696 / JCM 1002 / NBRC 13953 / NCIMB 11778 / NCTC 12712 / WDCM 00102 / Lb 14).